The chain runs to 429 residues: Histidinol dehydrogenase (429 aa).

Residues Tyr-130, Gln-191, and Asn-214 each contribute to the NAD(+) site. Residues Ser-237, Gln-259, and His-262 each contribute to the substrate site. The Zn(2+) site is built by Gln-259 and His-262. Catalysis depends on proton acceptor residues Glu-327 and His-328. Residues His-328, Asp-361, Glu-415, and His-420 each coordinate substrate. Position 361 (Asp-361) interacts with Zn(2+). Residue His-420 participates in Zn(2+) binding.

This sequence belongs to the histidinol dehydrogenase family. Requires Zn(2+) as cofactor.

The catalysed reaction is L-histidinol + 2 NAD(+) + H2O = L-histidine + 2 NADH + 3 H(+). It participates in amino-acid biosynthesis; L-histidine biosynthesis; L-histidine from 5-phospho-alpha-D-ribose 1-diphosphate: step 9/9. Catalyzes the sequential NAD-dependent oxidations of L-histidinol to L-histidinaldehyde and then to L-histidine. This chain is Histidinol dehydrogenase, found in Neisseria gonorrhoeae (strain ATCC 700825 / FA 1090).